A 341-amino-acid chain; its full sequence is Glycerol-3-phosphate dehydrogenase [NAD(P)+] (341 aa).

Positions 12, 13, 33, and 107 each coordinate NADPH. Sn-glycerol 3-phosphate contacts are provided by lysine 107, glycine 134, and threonine 136. Residue alanine 138 participates in NADPH binding. Positions 189, 242, 252, 253, and 254 each coordinate sn-glycerol 3-phosphate. Lysine 189 functions as the Proton acceptor in the catalytic mechanism. Arginine 253 contacts NADPH. NADPH-binding residues include valine 277 and glutamate 279.

It belongs to the NAD-dependent glycerol-3-phosphate dehydrogenase family.

The protein resides in the cytoplasm. The catalysed reaction is sn-glycerol 3-phosphate + NAD(+) = dihydroxyacetone phosphate + NADH + H(+). It catalyses the reaction sn-glycerol 3-phosphate + NADP(+) = dihydroxyacetone phosphate + NADPH + H(+). It functions in the pathway membrane lipid metabolism; glycerophospholipid metabolism. In terms of biological role, catalyzes the reduction of the glycolytic intermediate dihydroxyacetone phosphate (DHAP) to sn-glycerol 3-phosphate (G3P), the key precursor for phospholipid synthesis. The sequence is that of Glycerol-3-phosphate dehydrogenase [NAD(P)+] from Halothermothrix orenii (strain H 168 / OCM 544 / DSM 9562).